We begin with the raw amino-acid sequence, 275 residues long: Phosphatidylglycerol--prolipoprotein diacylglyceryl transferase (275 aa).

4 helical membrane passes run 20–40 (FTIHWYGVIIASGVVLALLLA), 58–78 (LLWALPIAIICARIYYVVFQW), 88–108 (IIAIWDGGIAIYGAILGGFIV), and 118–138 (LSSWLMMDIIAPTLIMAQGIG). Arg-139 provides a ligand contact to a 1,2-diacyl-sn-glycero-3-phospho-(1'-sn-glycerol). 2 consecutive transmembrane segments (helical) span residues 209-229 (GEIFLTYVMWYAFGRFFIEGM) and 239-259 (IRISQLLSIVFFVSALIILII).

This sequence belongs to the Lgt family.

The protein localises to the cell membrane. The catalysed reaction is L-cysteinyl-[prolipoprotein] + a 1,2-diacyl-sn-glycero-3-phospho-(1'-sn-glycerol) = an S-1,2-diacyl-sn-glyceryl-L-cysteinyl-[prolipoprotein] + sn-glycerol 1-phosphate + H(+). It functions in the pathway protein modification; lipoprotein biosynthesis (diacylglyceryl transfer). In terms of biological role, catalyzes the transfer of the diacylglyceryl group from phosphatidylglycerol to the sulfhydryl group of the N-terminal cysteine of a prolipoprotein, the first step in the formation of mature lipoproteins. The sequence is that of Phosphatidylglycerol--prolipoprotein diacylglyceryl transferase from Limosilactobacillus reuteri (strain DSM 20016) (Lactobacillus reuteri).